The sequence spans 92 residues: Small ribosomal subunit protein uS19c (92 aa).

It belongs to the universal ribosomal protein uS19 family.

Its subcellular location is the plastid. It is found in the chloroplast. Its function is as follows. Protein S19 forms a complex with S13 that binds strongly to the 16S ribosomal RNA. This Oltmannsiellopsis viridis (Marine flagellate) protein is Small ribosomal subunit protein uS19c.